A 306-amino-acid chain; its full sequence is Homoserine O-acetyltransferase (306 aa).

Residue Cys142 is the Acyl-thioester intermediate of the active site. Positions 163 and 192 each coordinate substrate. The active-site Proton acceptor is the His235. Glu237 is an active-site residue. Arg249 contacts substrate.

Belongs to the MetA family.

It localises to the cytoplasm. It catalyses the reaction L-homoserine + acetyl-CoA = O-acetyl-L-homoserine + CoA. Its pathway is amino-acid biosynthesis; L-methionine biosynthesis via de novo pathway; O-acetyl-L-homoserine from L-homoserine: step 1/1. Its function is as follows. Transfers an acetyl group from acetyl-CoA to L-homoserine, forming acetyl-L-homoserine. This chain is Homoserine O-acetyltransferase, found in Clostridium botulinum (strain Eklund 17B / Type B).